The following is a 229-amino-acid chain: Large ribosomal subunit protein uL1 (229 aa).

The protein belongs to the universal ribosomal protein uL1 family. Part of the 50S ribosomal subunit.

In terms of biological role, binds directly to 23S rRNA. The L1 stalk is quite mobile in the ribosome, and is involved in E site tRNA release. Functionally, protein L1 is also a translational repressor protein, it controls the translation of the L11 operon by binding to its mRNA. The sequence is that of Large ribosomal subunit protein uL1 from Staphylococcus aureus (strain MRSA252).